Here is a 207-residue protein sequence, read N- to C-terminus: Large ribosomal subunit protein uL4 (207 aa).

The disordered stretch occupies residues 47–78 (GTAKTKTRAEVRGGGKKPWRQKGTGRARQGSI). Residues 60-71 (GGKKPWRQKGTG) show a composition bias toward basic residues.

It belongs to the universal ribosomal protein uL4 family. As to quaternary structure, part of the 50S ribosomal subunit.

One of the primary rRNA binding proteins, this protein initially binds near the 5'-end of the 23S rRNA. It is important during the early stages of 50S assembly. It makes multiple contacts with different domains of the 23S rRNA in the assembled 50S subunit and ribosome. Its function is as follows. Forms part of the polypeptide exit tunnel. The chain is Large ribosomal subunit protein uL4 from Acholeplasma laidlawii (strain PG-8A).